The primary structure comprises 587 residues: A-type ATP synthase subunit A (587 aa).

234-241 (GPFGSGKT) contacts ATP.

This sequence belongs to the ATPase alpha/beta chains family. The N-terminus (approximately residues 106-122) interacts with subunit H. Has multiple subunits with at least A(3), B(3), C, D, E(1 or 2), F, H(2), I and proteolipid K(x).

It is found in the cell membrane. It carries out the reaction ATP + H2O + 4 H(+)(in) = ADP + phosphate + 5 H(+)(out). With respect to regulation, ATP hydrolysis is inhibited by N',N'-dicyclohexylcarbodiimide. Its function is as follows. Component of the A-type ATP synthase that produces ATP from ADP in the presence of a proton gradient across the membrane. The A chain is the catalytic subunit. Hydrolyzes ATP, GTP (86% of ATPase rate) and UTP (54% of ATPase rate), has very poor activity on CTP. This chain is A-type ATP synthase subunit A, found in Methanocaldococcus jannaschii (strain ATCC 43067 / DSM 2661 / JAL-1 / JCM 10045 / NBRC 100440) (Methanococcus jannaschii).